The chain runs to 193 residues: Acyl carrier protein phosphodiesterase (193 aa).

This sequence belongs to the AcpH family.

The enzyme catalyses holo-[ACP] + H2O = apo-[ACP] + (R)-4'-phosphopantetheine + H(+). Its function is as follows. Converts holo-ACP to apo-ACP by hydrolytic cleavage of the phosphopantetheine prosthetic group from ACP. The polypeptide is Acyl carrier protein phosphodiesterase (Escherichia coli O157:H7).